The chain runs to 95 residues: Acylphosphatase (95 aa).

One can recognise an Acylphosphatase-like domain in the interval 10 to 95 (CIHVTVSGKV…VEDYSDFRVR (86 aa)). Residues R25 and N43 contribute to the active site.

This sequence belongs to the acylphosphatase family.

The enzyme catalyses an acyl phosphate + H2O = a carboxylate + phosphate + H(+). The sequence is that of Acylphosphatase (acyP) from Coxiella burnetii (strain RSA 493 / Nine Mile phase I).